A 176-amino-acid polypeptide reads, in one-letter code: MRDRRASYEYEDLLACGRGELFGPGNAQLPLPPMLMFDRIAEISETGGEHGKGLIRAELEVKPDLWFFGCHFKGDPVMPGCLGLDAMWQLVGFFLGWSGGIGPGRALGLGELKFSGQVQPNIKKVVYTIDIKRVMRSKLWLGIADGTLAADGEIFYRAKDLKVGLFKQTAAAQPAE.

His-71 is a catalytic residue.

This sequence belongs to the thioester dehydratase family. FabA subfamily. Homodimer.

It localises to the cytoplasm. It catalyses the reaction a (3R)-hydroxyacyl-[ACP] = a (2E)-enoyl-[ACP] + H2O. It carries out the reaction (3R)-hydroxydecanoyl-[ACP] = (2E)-decenoyl-[ACP] + H2O. The enzyme catalyses (2E)-decenoyl-[ACP] = (3Z)-decenoyl-[ACP]. The protein operates within lipid metabolism; fatty acid biosynthesis. Necessary for the introduction of cis unsaturation into fatty acids. Catalyzes the dehydration of (3R)-3-hydroxydecanoyl-ACP to E-(2)-decenoyl-ACP and then its isomerization to Z-(3)-decenoyl-ACP. Can catalyze the dehydratase reaction for beta-hydroxyacyl-ACPs with saturated chain lengths up to 16:0, being most active on intermediate chain length. This chain is 3-hydroxydecanoyl-[acyl-carrier-protein] dehydratase, found in Rhodopseudomonas palustris (strain BisB18).